The following is a 151-amino-acid chain: Extracellular globin-4 (151 aa).

In terms of domain architecture, Globin spans 6-151; the sequence is CCSYEDRREI…LVARIAKDLP (146 aa). A disulfide bridge links cysteine 7 with cysteine 138. Histidine 101 lines the heme b pocket.

Belongs to the globin family. As to quaternary structure, the extracellular hemoglobin of the earthworm consists of 12 subunits that have a hexagonal bilayer structure with a molecular weight near 3.8 million. Each one-twelfth subunit is composed primarily of disulfide linked trimers (chains A, B, and C) and monomers (chain D).

Its subcellular location is the secreted. The protein is Extracellular globin-4 of Lumbricus terrestris (Common earthworm).